Reading from the N-terminus, the 251-residue chain is 1-(5-phosphoribosyl)-5-[(5-phosphoribosylamino)methylideneamino] imidazole-4-carboxamide isomerase (251 aa).

Aspartate 8 (proton acceptor) is an active-site residue. The active-site Proton donor is aspartate 131.

Belongs to the HisA/HisF family.

It is found in the cytoplasm. The enzyme catalyses 1-(5-phospho-beta-D-ribosyl)-5-[(5-phospho-beta-D-ribosylamino)methylideneamino]imidazole-4-carboxamide = 5-[(5-phospho-1-deoxy-D-ribulos-1-ylimino)methylamino]-1-(5-phospho-beta-D-ribosyl)imidazole-4-carboxamide. It functions in the pathway amino-acid biosynthesis; L-histidine biosynthesis; L-histidine from 5-phospho-alpha-D-ribose 1-diphosphate: step 4/9. The polypeptide is 1-(5-phosphoribosyl)-5-[(5-phosphoribosylamino)methylideneamino] imidazole-4-carboxamide isomerase (Burkholderia lata (strain ATCC 17760 / DSM 23089 / LMG 22485 / NCIMB 9086 / R18194 / 383)).